We begin with the raw amino-acid sequence, 241 residues long: MDATIRLEESWKAVLGGEFRHGYMAELKRFLLEEKQQGRQIFPRGVEYFRALDLTPLDRVRVVILGQDPYHGDGQAHGLCFSVRPGVRTPPSLVNIYKELQEDLGIPPARHGFLESWARQGVLLLNSVLTVERGRAASHQGRGWERFTDAVIRAVNEQAQPVVFMLWGSYAQRKAAFVDRSRHLVLTAPHPSPLSAHAGFFGCRHFSKANAFLTSKGLDPIDWRLPEDPPLAVERQMAPNC.

The active-site Proton acceptor is the Asp68.

This sequence belongs to the uracil-DNA glycosylase (UDG) superfamily. UNG family.

The protein localises to the cytoplasm. It catalyses the reaction Hydrolyzes single-stranded DNA or mismatched double-stranded DNA and polynucleotides, releasing free uracil.. Functionally, excises uracil residues from the DNA which can arise as a result of misincorporation of dUMP residues by DNA polymerase or due to deamination of cytosine. This Rhizobium meliloti (strain 1021) (Ensifer meliloti) protein is Uracil-DNA glycosylase.